A 511-amino-acid polypeptide reads, in one-letter code: Gap junction alpha-3 protein (511 aa).

The stretch at 2-15 (GDWSFLGRLLENAQ) is an intramembrane region. Topologically, residues 16–19 (EHST) are cytoplasmic. A helical membrane pass occupies residues 20 to 40 (VIGKVWLTVLFIFRILVLGAA). Residues 41–71 (AEEVWGDEQSDFTCNTQQPGCENVCYDKAFP) lie on the Extracellular side of the membrane. 3 disulfide bridges follow: C54/C214, C61/C208, and C65/C203. A helical transmembrane segment spans residues 72–92 (ISHIRFWVLQIIFVSTPTLIY). The Cytoplasmic segment spans residues 93–174 (LGHVLHIVRM…GALLRTYIFN (82 aa)). The span at 110-119 (EEELKKRGSV) shows a compositional bias: basic and acidic residues. The segment at 110 to 143 (EEELKKRGSVKDNNYPGAATSGGGSGGGNNFKDP) is disordered. Over residues 129-138 (TSGGGSGGGN) the composition is skewed to gly residues. Residues 175–195 (IIFKTLFEVGFIVGQYFLYGF) form a helical membrane-spanning segment. Residues 196–223 (ELKPVYQCSRPPCPHTVDCFISRPTEKT) are Extracellular-facing. A helical transmembrane segment spans residues 224 to 244 (IFIIFMLVVASVSLLLNMLEI). Residues 245–511 (YHLGWKKLKQ…SRARSDDLAV (267 aa)) are Cytoplasmic-facing. Positions 397–511 (AEQQGKAPSS…SRARSDDLAV (115 aa)) are disordered. Composition is skewed to low complexity over residues 403–415 (APSS…TPSS) and 440–456 (TTTN…ASGS).

It belongs to the connexin family. A hemichannel or connexon is composed of a hexamer of connexins. A functional gap junction is formed by the apposition of two hemichannels. During early stages of lens development, interacts with the C-terminus of MIP. As to expression, detected in eye lens.

The protein localises to the cell membrane. Its subcellular location is the cell junction. The protein resides in the gap junction. Functionally, structural component of lens fiber gap junctions. Gap junctions are dodecameric channels that connect the cytoplasm of adjoining cells. They are formed by the docking of two hexameric hemichannels, one from each cell membrane. Small molecules and ions diffuse from one cell to a neighboring cell via the central pore. The polypeptide is Gap junction alpha-3 protein (GJA3) (Gallus gallus (Chicken)).